The following is a 143-amino-acid chain: Mediator of RNA polymerase II transcription subunit 21 (143 aa).

Residues K53–T130 adopt a coiled-coil conformation.

This sequence belongs to the Mediator complex subunit 21 family. In terms of assembly, component of the Mediator complex.

It localises to the nucleus. Component of the Mediator complex, a coactivator involved in the regulated transcription of nearly all RNA polymerase II-dependent genes. Mediator functions as a bridge to convey information from gene-specific regulatory proteins to the basal RNA polymerase II transcription machinery. Mediator is recruited to promoters by direct interactions with regulatory proteins and serves as a scaffold for the assembly of a functional preinitiation complex with RNA polymerase II and the general transcription factors. This is Mediator of RNA polymerase II transcription subunit 21 (SRB7) from Kluyveromyces lactis (strain ATCC 8585 / CBS 2359 / DSM 70799 / NBRC 1267 / NRRL Y-1140 / WM37) (Yeast).